Consider the following 800-residue polypeptide: Ribosome-releasing factor 2, mitochondrial (800 aa).

The tr-type G domain occupies 21–307 (SKVRNIGIIA…AIANYLPSPS (287 aa)). Residues 30–37 (AHIDAGKT), 95–99 (DTPGH), and 147–150 (NKMD) each bind GTP.

The protein belongs to the TRAFAC class translation factor GTPase superfamily. Classic translation factor GTPase family. EF-G/EF-2 subfamily.

Its subcellular location is the mitochondrion. In terms of biological role, mitochondrial GTPase that mediates the disassembly of ribosomes from messenger RNA at the termination of mitochondrial protein biosynthesis. Not involved in the GTP-dependent ribosomal translocation step during translation elongation. This chain is Ribosome-releasing factor 2, mitochondrial, found in Kluyveromyces lactis (strain ATCC 8585 / CBS 2359 / DSM 70799 / NBRC 1267 / NRRL Y-1140 / WM37) (Yeast).